The sequence spans 600 residues: Gamma-terpinene synthase, chloroplastic (600 aa).

The transit peptide at 1–40 (MALNLLSSLPAACNFTRLSLPLSSKVNGFVPPITQVQYPM) directs the protein to the chloroplast. 4 residues coordinate Mg(2+): Asp-353, Asp-357, Asp-498, and Glu-506. A DDXXD motif motif is present at residues 353–357 (DDVYD).

Belongs to the terpene synthase family. Mn(2+) serves as cofactor. Requires Mg(2+) as cofactor.

It localises to the plastid. The protein localises to the chloroplast. It carries out the reaction (2E)-geranyl diphosphate = gamma-terpinene + diphosphate. It functions in the pathway secondary metabolite biosynthesis; terpenoid biosynthesis. With respect to regulation, inhibited by 100 mM KCl. Its function is as follows. Monoterpene synthase which catalyzes the conversion of geranyl diphosphate to gamma-terpinene and the minor products limonene, alpha-pinene, beta-pinene, alpha-terpinolene, alpha-thujene, alpha-terpinene, myrcene and sabinene. In Citrus limon (Lemon), this protein is Gamma-terpinene synthase, chloroplastic.